Reading from the N-terminus, the 1025-residue chain is Exportin-T (1025 aa).

It belongs to the exportin family.

The protein resides in the nucleus. Its subcellular location is the cytoplasm. Its function is as follows. tRNA nucleus export receptor which facilitates tRNA translocation across the nuclear pore complex. Involved in pre-tRNA splicing, probably by affecting the interaction of pre-tRNA with splicing endonuclease. The polypeptide is Exportin-T (LOS1) (Candida albicans (strain SC5314 / ATCC MYA-2876) (Yeast)).